The following is an 81-amino-acid chain: Large ribosomal subunit protein bL27m (81 aa).

Positions 1-11 (MATKKSGGSSR) are enriched in polar residues. The disordered stretch occupies residues 1 to 20 (MATKKSGGSSRNGRDSKGRR).

This sequence belongs to the bacterial ribosomal protein bL27 family.

Its subcellular location is the mitochondrion. The sequence is that of Large ribosomal subunit protein bL27m (RPL27) from Reclinomonas americana.